The chain runs to 37 residues: Cytochrome b6-f complex subunit 5 (37 aa).

The chain crosses the membrane as a helical span at residues 5 to 25 (LLSGIILGLIPVTLSGLLVAA).

Belongs to the PetG family. The 4 large subunits of the cytochrome b6-f complex are cytochrome b6, subunit IV (17 kDa polypeptide, PetD), cytochrome f and the Rieske protein, while the 4 small subunits are PetG, PetL, PetM and PetN. The complex functions as a dimer.

It localises to the plastid. It is found in the chloroplast thylakoid membrane. Functionally, component of the cytochrome b6-f complex, which mediates electron transfer between photosystem II (PSII) and photosystem I (PSI), cyclic electron flow around PSI, and state transitions. PetG is required for either the stability or assembly of the cytochrome b6-f complex. The polypeptide is Cytochrome b6-f complex subunit 5 (Porphyra purpurea (Red seaweed)).